The chain runs to 164 residues: Transcription elongation factor GreA (164 aa).

The stretch at 50–75 forms a coiled coil; sequence YHAAREEQGQQEARIRQLQDLLNIAK.

This sequence belongs to the GreA/GreB family.

In terms of biological role, necessary for efficient RNA polymerase transcription elongation past template-encoded arresting sites. The arresting sites in DNA have the property of trapping a certain fraction of elongating RNA polymerases that pass through, resulting in locked ternary complexes. Cleavage of the nascent transcript by cleavage factors such as GreA or GreB allows the resumption of elongation from the new 3'terminus. GreA releases sequences of 2 to 3 nucleotides. This is Transcription elongation factor GreA from Mycobacterium leprae (strain Br4923).